We begin with the raw amino-acid sequence, 73 residues long: Toxin Td5 (73 aa).

Residues 1-7 (IGMVVEC) form the signal peptide. An LCN-type CS-alpha/beta domain is found at 8–70 (KDGYLVGNDG…IWNSATNRCR (63 aa)). 4 disulfides stabilise this stretch: C18/C69, C22/C44, C30/C50, and C34/C52. R70 carries the arginine amide modification.

Belongs to the long (4 C-C) scorpion toxin superfamily. Sodium channel inhibitor family. Beta subfamily. As to expression, expressed by the venom gland.

Its subcellular location is the secreted. Functionally, beta toxins bind voltage-independently at site-4 of sodium channels (Nav) and shift the voltage of activation toward more negative potentials thereby affecting sodium channel activation and promoting spontaneous and repetitive firing. The chain is Toxin Td5 from Tityus discrepans (Venezuelan scorpion).